A 158-amino-acid chain; its full sequence is Small ribosomal subunit protein uS7 (158 aa).

The protein belongs to the universal ribosomal protein uS7 family. In terms of assembly, part of the 30S ribosomal subunit. Contacts proteins S9 and S11.

Its function is as follows. One of the primary rRNA binding proteins, it binds directly to 16S rRNA where it nucleates assembly of the head domain of the 30S subunit. Is located at the subunit interface close to the decoding center, probably blocks exit of the E-site tRNA. In Acidiphilium cryptum (strain JF-5), this protein is Small ribosomal subunit protein uS7.